Reading from the N-terminus, the 384-residue chain is Carbamoyl phosphate synthase small chain (384 aa).

The interval 1-192 (MIKKIPAILV…LADRNREKIY (192 aa)) is CPSase. L-glutamine contacts are provided by Ser51, Gly244, and Gly246. The Glutamine amidotransferase type-1 domain maps to 196 to 382 (KVIVIDFGVK…IEIMKQFRKE (187 aa)). Cys272 (nucleophile) is an active-site residue. L-glutamine is bound by residues Met273, Gln276, Asn312, Gly314, and Phe315. Active-site residues include His355 and Glu357.

This sequence belongs to the CarA family. As to quaternary structure, composed of two chains; the small (or glutamine) chain promotes the hydrolysis of glutamine to ammonia, which is used by the large (or ammonia) chain to synthesize carbamoyl phosphate. Tetramer of heterodimers (alpha,beta)4.

The protein resides in the plastid. The protein localises to the chloroplast. It carries out the reaction hydrogencarbonate + L-glutamine + 2 ATP + H2O = carbamoyl phosphate + L-glutamate + 2 ADP + phosphate + 2 H(+). The enzyme catalyses L-glutamine + H2O = L-glutamate + NH4(+). The protein operates within amino-acid biosynthesis; L-arginine biosynthesis; carbamoyl phosphate from bicarbonate: step 1/1. Its pathway is pyrimidine metabolism; UMP biosynthesis via de novo pathway; (S)-dihydroorotate from bicarbonate: step 1/3. Small subunit of the glutamine-dependent carbamoyl phosphate synthetase (CPSase). CPSase catalyzes the formation of carbamoyl phosphate from the ammonia moiety of glutamine, carbonate, and phosphate donated by ATP, constituting the first step of 2 biosynthetic pathways, one leading to arginine and/or urea and the other to pyrimidine nucleotides. The small subunit (glutamine amidotransferase) binds and cleaves glutamine to supply the large subunit with the substrate ammonia. This Porphyra purpurea (Red seaweed) protein is Carbamoyl phosphate synthase small chain.